Consider the following 21-residue polypeptide: 5-methyltetrahydropteroyltriglutamate--homocysteine methyltransferase (21 aa).

It belongs to the vitamin-B12 independent methionine synthase family. Requires Zn(2+) as cofactor.

It localises to the cytoplasm. The enzyme catalyses 5-methyltetrahydropteroyltri-L-glutamate + L-homocysteine = tetrahydropteroyltri-L-glutamate + L-methionine. Its pathway is amino-acid biosynthesis; L-methionine biosynthesis via de novo pathway; L-methionine from L-homocysteine (MetE route): step 1/1. Functionally, catalyzes the transfer of a methyl group from 5-methyltetrahydrofolate to homocysteine resulting in methionine formation. This chain is 5-methyltetrahydropteroyltriglutamate--homocysteine methyltransferase, found in Populus euphratica (Euphrates poplar).